The primary structure comprises 1178 residues: Mannosyltransferase regulator 4 (1178 aa).

At 1–27 (MLQRISSKLHRRFLSGLLRVKHYPLRR) the chain is on the cytoplasmic side. A helical; Signal-anchor for type II membrane protein membrane pass occupies residues 28–48 (ILLPLILLQIIIITFIWSNSP). The Lumenal segment spans residues 49 to 1178 (QRNGLGRDAD…KKKQEEGHSN (1130 aa)). The DXD motif lies at 519-521 (DFD). The interval 1041 to 1178 (EKKKKEEEEK…KKKQEEGHSN (138 aa)) is disordered. Tandem repeats lie at residues 1042-1049 (KKKKEEEE), 1050-1057 (KKKKEEEE), 1058-1065 (KKKKEEEE), 1066-1073 (KKKKEEEE), 1074-1081 (KKKKEEEE), and 1082-1089 (KKKKEEEE). The interval 1042-1174 (KKKKEEEEKK…EEEEKKKQEE (133 aa)) is 17 X 8 AA tandem repeats of K-K-K-K-E-E-E-E. One copy of the 7; approximate repeat lies at 1090–1097 (KKKQEEEE). Residues 1098–1105 (KKKKEEEE) form repeat 8. One copy of the 9; approximate repeat lies at 1106-1113 (KKKQEEGE). The 10; approximate repeat unit spans residues 1114–1121 (KMKNEDEE). Residues 1122–1129 (NKKNEDEE) form an 11; approximate repeat. Repeat 12 spans residues 1130–1137 (KKKNEEEE). A 13; approximate repeat occupies 1138 to 1144 (KKKQEEK). The 14; approximate repeat unit spans residues 1145–1152 (NKKNEDEE). The stretch at 1153-1160 (KKKQEEEE) is one 15; approximate repeat. A 16; approximate repeat occupies 1161–1168 (KKKNEEEE). A 17; truncated repeat occupies 1169-1174 (KKKQEE).

Belongs to the MNN4 family.

Its subcellular location is the golgi apparatus membrane. In terms of biological role, golgi apparatus protein involved in N-glycan mannosylphosphorylation. While MNN4 seems to have a regulatory role in N-glycan mannosylphosphorylation, a transferase activity of MNN4 can not be ruled out. Mediates mannosylphosphate transfer in both the core and outer chain portions of N-linked oligosaccharides. Has partially redundant function with MNN14. This is Mannosyltransferase regulator 4 from Saccharomyces cerevisiae (strain ATCC 204508 / S288c) (Baker's yeast).